The following is a 222-amino-acid chain: Deoxyribose-phosphate aldolase (222 aa).

Catalysis depends on Asp89, which acts as the Proton donor/acceptor. Catalysis depends on Lys152, which acts as the Schiff-base intermediate with acetaldehyde. The active-site Proton donor/acceptor is Lys181.

The protein belongs to the DeoC/FbaB aldolase family. DeoC type 1 subfamily.

It is found in the cytoplasm. It catalyses the reaction 2-deoxy-D-ribose 5-phosphate = D-glyceraldehyde 3-phosphate + acetaldehyde. Its pathway is carbohydrate degradation; 2-deoxy-D-ribose 1-phosphate degradation; D-glyceraldehyde 3-phosphate and acetaldehyde from 2-deoxy-alpha-D-ribose 1-phosphate: step 2/2. Functionally, catalyzes a reversible aldol reaction between acetaldehyde and D-glyceraldehyde 3-phosphate to generate 2-deoxy-D-ribose 5-phosphate. This is Deoxyribose-phosphate aldolase from Clostridium novyi (strain NT).